The following is a 2517-amino-acid chain: Cullin-9 (2517 aa).

A Glycyl lysine isopeptide (Lys-Gly) (interchain with G-Cter in ubiquitin) cross-link involves residue Lys-87. Over residues 276–288 (SPELGAGDQSSPC) the composition is skewed to polar residues. Residues 276 to 296 (SPELGAGDQSSPCATREKSRG) form a disordered region. Positions 366–439 (RSEFSSRSGY…HWHMLEILGP (74 aa)) constitute a CPH domain. A compositionally biased stretch (low complexity) spans 576-589 (SNEPSSSSTSRNHS). Positions 576 to 639 (SNEPSSSSTS…TETPMAQSDS (64 aa)) are disordered. The segment covering 593–609 (DPEEESKSEASFSEEET) has biased composition (acidic residues). The span at 610-630 (ESLKAKAEAPKTEAEPTKTRT) shows a compositional bias: basic and acidic residues. Ser-976 is modified (phosphoserine). Residues 1143-1322 (PINIPFFDVF…RTCLFYTIRA (180 aa)) enclose the DOC domain. 1363–1370 (AAQALGKT) provides a ligand contact to ATP. Disordered stretches follow at residues 1432–1466 (VEPP…VLPS) and 1664–1685 (DEEE…AEKE). The span at 1433-1443 (EPPPGPSPEPS) shows a compositional bias: pro residues. The residue at position 1457 (Ser-1457) is a Phosphoserine. A coiled-coil region spans residues 1649-1691 (LFQLQRLDKLFLEQEDEEEKRLEEEEEEEEEEEAEKELFIEDP). A compositionally biased stretch (acidic residues) spans 1664 to 1683 (DEEEKRLEEEEEEEEEEEAE). Lys-1881 is covalently cross-linked (Glycyl lysine isopeptide (Lys-Gly) (interchain with G-Cter in NEDD8)). Positions 2066-2283 (RPDHCPVCVS…KDYYNCSAMV (218 aa)) are TRIAD supradomain. Zn(2+) is bound by residues Cys-2070, Cys-2073, Cys-2088, His-2090, Cys-2093, Cys-2096, Cys-2115, Cys-2120, Cys-2160, Cys-2166, Cys-2181, Cys-2184, Cys-2189, Cys-2192, His-2198, Cys-2203, Cys-2236, and Cys-2239. The RING-type 1 zinc-finger motif lies at 2070 to 2120 (CPVCVSPLGCDDDLPSLCCMHYCCKSCWNEYLTTRIEQNLVLNCTCPIADC). The IBR-type zinc-finger motif lies at 2140–2203 (SKYEKALLRG…FPEAHYPASC (64 aa)). The segment at 2236–2265 (CPSCQAPIEKNEGCLHMTCAKCNHGFCWRC) adopts an RING-type 2; atypical zinc-finger fold. Cys-2249 is a catalytic residue. Zn(2+) is bound by residues Cys-2254, Cys-2257, Cys-2262, Cys-2265, His-2273, and Cys-2279. Residues 2365 to 2385 (VEQQTENLELHTNALQILLEE) adopt a coiled-coil conformation. Ser-2436 is subject to Phosphoserine. The interval 2442 to 2517 (WEAKGPNMPG…EEEDEDEAYD (76 aa)) is disordered. Acidic residues-rich tracts occupy residues 2461–2499 (EAEE…ENLD) and 2506–2517 (GDEEEDEDEAYD).

The protein belongs to the cullin family. In terms of assembly, component of the Cul9-RING complex consisting of CUL9 and RBX1; the CUL9-RBX1 complex is a heterododecamer composed of six CUL9 and six RBX1 protomers. Interacts (via C-terminal TRIAD/RBR supradomain) with E2 ubiquitin-conjugating enzyme UBE2L3. Interacts with CUL7; the interaction with the CUL7 component of the 3M complex leads to inhibition of CUL9 activity. The CUL7-CUL9 heterodimer seems to interact specifically with TP53, likely via the CPH domain. Forms a complex with p53/TP53 in the cytoplasm of unstressed cells. Interacts with UBCH7 and UBCH8. Post-translationally, autoubiquitinated by the CUL9-RBX1 complex at Lys-87. In terms of processing, neddylated. Neddylation is mediated by E1 enzyme UBA3-NAE1 complex and E2 enzyme UBE2F. Structural rearrangment of the C-terminal TRIAD/RBR supradomain may play a role in neddylation and deneddylation. In terms of tissue distribution, ubiquitously expressed in all tissues with highest expression in testis brain and kidney.

The protein resides in the cytoplasm. Core component of a Cul9-RING ubiquitin-protein ligase complex composed of CUL9 and RBX1. The CUL9-RBX1 complex mediates ubiquitination and subsequent degradation of BIRC5 and is required to maintain microtubule dynamics and genome integrity. Acts downstream of the 3M complex, which inhibits the ubiquitination of BIRC5. The CUL9-RBX1 complex also mediates mono-ubiquitination of p53/TP53. Acts as a cytoplasmic anchor protein in p53/TP53-associated protein complex. Regulates the subcellular localization of p53/TP53 and its subsequent function. Ubiquitinates apurinic/apyrimidinic endodeoxyribonuclease APEX2. Ubiquitination by the CUL9-RBX1 complex is predominantly mediated by E2 ubiquitin-conjugating enzymes UBE2L3 and UBE2D2. This Homo sapiens (Human) protein is Cullin-9 (CUL9).